A 300-amino-acid polypeptide reads, in one-letter code: ATP-dependent (S)-NAD(P)H-hydrate dehydratase (300 aa).

One can recognise a YjeF C-terminal domain in the interval 14 to 293 (LLTLFKTIVP…NEISAVFRSD (280 aa)). (6S)-NADPHX-binding positions include Gly114 and 167 to 173 (NAMEFRR). ATP contacts are provided by residues 198–202 (KGVND) and 219–228 (GSGRRCGGQG). Asp229 is a binding site for (6S)-NADPHX.

It belongs to the NnrD/CARKD family. Mg(2+) serves as cofactor.

It carries out the reaction (6S)-NADHX + ATP = ADP + phosphate + NADH + H(+). The catalysed reaction is (6S)-NADPHX + ATP = ADP + phosphate + NADPH + H(+). In terms of biological role, catalyzes the dehydration of the S-form of NAD(P)HX at the expense of ATP, which is converted to ADP. Together with NAD(P)HX epimerase, which catalyzes the epimerization of the S- and R-forms, the enzyme allows the repair of both epimers of NAD(P)HX, a damaged form of NAD(P)H that is a result of enzymatic or heat-dependent hydration. This Drosophila pseudoobscura pseudoobscura (Fruit fly) protein is ATP-dependent (S)-NAD(P)H-hydrate dehydratase.